Consider the following 405-residue polypeptide: Acetate kinase (405 aa).

A Mg(2+)-binding site is contributed by Asn7. Lys14 provides a ligand contact to ATP. Arg99 lines the substrate pocket. The active-site Proton donor/acceptor is Asp156. Residue 215–219 (HLGNG) coordinates ATP. Glu391 is a Mg(2+) binding site.

This sequence belongs to the acetokinase family. In terms of assembly, homodimer. Requires Mg(2+) as cofactor. Mn(2+) is required as a cofactor.

The protein resides in the cytoplasm. The enzyme catalyses acetate + ATP = acetyl phosphate + ADP. The protein operates within metabolic intermediate biosynthesis; acetyl-CoA biosynthesis; acetyl-CoA from acetate: step 1/2. Functionally, catalyzes the formation of acetyl phosphate from acetate and ATP. Can also catalyze the reverse reaction. In Nostoc sp. (strain PCC 7120 / SAG 25.82 / UTEX 2576), this protein is Acetate kinase.